Reading from the N-terminus, the 97-residue chain is Large ribosomal subunit protein bL31 (97 aa).

Residues Lys-76 to Leu-97 are disordered. Over residues Gly-83 to Leu-97 the composition is skewed to basic and acidic residues.

Belongs to the bacterial ribosomal protein bL31 family. Type A subfamily. Part of the 50S ribosomal subunit.

Functionally, binds the 23S rRNA. The protein is Large ribosomal subunit protein bL31 of Mycoplasma pneumoniae (strain ATCC 29342 / M129 / Subtype 1) (Mycoplasmoides pneumoniae).